Consider the following 313-residue polypeptide: MTRKFKAAIIGSGNIGTDLMIKIMRHGRHIEVGAMVGIDPASDGLARASRLGVGTTHEGVEGLTRLPIFEEIDFVFDATSAGAHVHNDALLRKYKPGIRVIDLTPAAIGPYCIPVVNGKQNLDALNVNMVTCGGQATVPMVAAVSRVTQVHYGEIVASIASKSAGPGTRANIDEFTETTSKAIEVVGGASKGKAIIVLNPADPPLIMRDTVYTLSDVADEAAIADSVARMAADVQSYVPGYRLKQTVQFDRVENLNVPGVGRISGLKTSIFLEVEGAAHYLPAYAGNLDIMTSAGLRTAEQMAARMTAGTVAA.

Position 12-15 (12-15) interacts with NAD(+); sequence SGNI. Cysteine 132 serves as the catalytic Acyl-thioester intermediate. NAD(+) is bound by residues 163 to 171 and asparagine 287; that span reads SAGPGTRAN.

It belongs to the acetaldehyde dehydrogenase family.

The catalysed reaction is acetaldehyde + NAD(+) + CoA = acetyl-CoA + NADH + H(+). This Paraburkholderia xenovorans (strain LB400) protein is Acetaldehyde dehydrogenase 2 (amnH).